The following is a 510-amino-acid chain: MTSSVSFASFRFPWLLKTFVLMVGLATVAFMVRKVSLTTDFSTFKPKFPEPARVDPVLKLLPEEHLRKLFTYSDIWLFPKNQCDCNSGKLRMKYKFQDAYNQKDLPAVNARRQAEFEHFQRREGLPRPPPLLAPPNLPFGYPVHGVEVMPLHTILIPGLQYEGPDAPVYEVILKASLGTLNTLADVPDDEVQGRGQRQLTISTRHRKVLNFILQHVTYTSTEYYLHKVDTVSMEYESSVAKFPVTIKQQTVPKLYDPGPERKIRNLVTIATKTFLRPHKLKILLQSIRKYYPDITVIVADDSKEPLEINDDYVEYYTMPFGKGWFAGRNLAISQVTTKYVLWVDDDFLFSDKTKIEVLVDVLEKTELDVVGGSVQGNTYQFRLLYEQTKNGSCLHQRWGSFQALDGFPGCTLTSGVVNFFLAHTEQLRRVGFDPILQRVAHGEFFIDGLGRLLVGSCPGVIINHQVRTPPKDPKLAALEKTYDKYRANTNSVIQFKVALQYFKNHLYCST.

Residues 1–15 (MTSSVSFASFRFPWL) are Cytoplasmic-facing. A helical; Signal-anchor for type II membrane protein transmembrane segment spans residues 16–32 (LKTFVLMVGLATVAFMV). Residues 33–510 (RKVSLTTDFS…YFKNHLYCST (478 aa)) are Lumenal-facing. Asn-390 carries N-linked (GlcNAc...) asparagine glycosylation.

It belongs to the glycosyltransferase 2 family. In terms of assembly, homodimer; disulfide-linked.

It localises to the golgi apparatus. Its subcellular location is the trans-Golgi network membrane. The enzyme catalyses an N-acetyl-alpha-neuraminyl-(2-&gt;3)-beta-D-galactosyl derivative + UDP-N-acetyl-alpha-D-galactosamine = an N-acetyl-beta-D-galactosaminyl-(1-&gt;4)-[N-acetyl-alpha-neuraminyl-(2-&gt;3)]-beta-D-galactosyl derivative + UDP + H(+). The catalysed reaction is a 3-O-{alpha-Neu5Ac-(2-&gt;3)-beta-D-Gal-(1-&gt;3)-[alpha-Neu5Ac-(2-&gt;6)]-alpha-D-GalNAc}-L-seryl-[protein] + UDP-N-acetyl-alpha-D-galactosamine = a 3-O-{[alpha-Neu5Ac-(2-&gt;3)]-beta-D-GalNAc-(1-&gt;4)-beta-D-Gal-(1-&gt;3)-[alpha-Neu5Ac-(2-&gt;6)]-alpha-D-GalNAc}-L-seryl-[protein] + UDP + H(+). It carries out the reaction a 3-O-{alpha-Neu5Ac-(2-&gt;3)-beta-D-Gal-(1-&gt;3)-[alpha-Neu5Ac-(2-&gt;6)]-alpha-D-GalNAc}-L-threonyl-[protein] + UDP-N-acetyl-alpha-D-galactosamine = a 3-O-{[alpha-Neu5Ac-(2-&gt;3)]-beta-D-GalNAc-(1-&gt;4)-beta-D-Gal-(1-&gt;3)-[alpha-Neu5Ac-(2-&gt;6)]-alpha-D-GalNAc}-L-threonyl-[protein] + UDP + H(+). It catalyses the reaction a neolactoside IV(3)-alpha-NeuAc-nLc4Cer + UDP-N-acetyl-alpha-D-galactosamine = a neolactoside IV(4)-GalNAc,IV(3)-alpha-NeuAc-nLc4Cer + UDP + H(+). It functions in the pathway protein modification; protein glycosylation. It participates in glycolipid biosynthesis. Its function is as follows. Beta-1,4 N-acetylgalactosaminyltransferase involved in the biosynthesis of T-lymphocyte CT glycan antigen carried by CD45 family of protein phosphatases. Catalyzes the transfer of N-acetylgalactosamine (GalNAc) group in a beta-1,4-linkage from UDP-GalNAc to the galactose residue of NeuAcalpha2-&gt;3Gal-R to form GalNAcbeta1-&gt;4(NeuAcalpha2-&gt;3)Gal-R glycan epitope. The sequence is that of Beta-1,4 N-acetylgalactosaminyltransferase 2 from Mus musculus (Mouse).